A 494-amino-acid chain; its full sequence is Glycogen synthase (494 aa).

Residue K24 participates in ADP-alpha-D-glucose binding.

It belongs to the glycosyltransferase 1 family. Bacterial/plant glycogen synthase subfamily.

It catalyses the reaction [(1-&gt;4)-alpha-D-glucosyl](n) + ADP-alpha-D-glucose = [(1-&gt;4)-alpha-D-glucosyl](n+1) + ADP + H(+). It functions in the pathway glycan biosynthesis; glycogen biosynthesis. Functionally, synthesizes alpha-1,4-glucan chains using ADP-glucose. This is Glycogen synthase from Aromatoleum aromaticum (strain DSM 19018 / LMG 30748 / EbN1) (Azoarcus sp. (strain EbN1)).